The sequence spans 208 residues: Uracil phosphoribosyltransferase (208 aa).

Residues Arg-78, Arg-103, and 130 to 138 (DPMLATGGS) contribute to the 5-phospho-alpha-D-ribose 1-diphosphate site. Uracil is bound by residues Ile-193 and 198–200 (GDA). Asp-199 is a 5-phospho-alpha-D-ribose 1-diphosphate binding site.

Belongs to the UPRTase family. Mg(2+) serves as cofactor.

It catalyses the reaction UMP + diphosphate = 5-phospho-alpha-D-ribose 1-diphosphate + uracil. It functions in the pathway pyrimidine metabolism; UMP biosynthesis via salvage pathway; UMP from uracil: step 1/1. Its activity is regulated as follows. Allosterically activated by GTP. Functionally, catalyzes the conversion of uracil and 5-phospho-alpha-D-ribose 1-diphosphate (PRPP) to UMP and diphosphate. The protein is Uracil phosphoribosyltransferase of Aliivibrio fischeri (strain MJ11) (Vibrio fischeri).